We begin with the raw amino-acid sequence, 162 residues long: Cyclic pyranopterin monophosphate synthase (162 aa).

Substrate is bound by residues 75-77 (MCH) and 115-116 (ME). Residue D130 is part of the active site.

Belongs to the MoaC family. As to quaternary structure, homohexamer; trimer of dimers.

It catalyses the reaction (8S)-3',8-cyclo-7,8-dihydroguanosine 5'-triphosphate = cyclic pyranopterin phosphate + diphosphate. It participates in cofactor biosynthesis; molybdopterin biosynthesis. Catalyzes the conversion of (8S)-3',8-cyclo-7,8-dihydroguanosine 5'-triphosphate to cyclic pyranopterin monophosphate (cPMP). This is Cyclic pyranopterin monophosphate synthase from Geobacillus thermodenitrificans (strain NG80-2).